A 632-amino-acid polypeptide reads, in one-letter code: MNIRSNPDTTLPAVTTGPLPSSRKIFSTPEAAPDLRVPLREIILTEGAGEPNLPVYDTSGPYTDPAVVIDVNAGLPRTRMAWVKERGGIEEYEGREIKPEDNGNVGASHAAAAFKAHHKPVRGVGDAPITQLEFARAGIITKEMIYVAERENIGRKQQLERAEAALKDGESFGADIPAFITPEFVRSEIARGRAIIPCNINHAELEPMIIGRNFLTKINANIGNSAVTSSVEEEVDKMVWAIRWGADTVMDLSTGRNIHTTREWILRNAPIPIGTVPIYQALEKCEGDPVKLTWELYRDTLVEQCEQGVDYFTIHAGVRLPYIHLTANRVTGIVSRGGSIMAKWCLAHHKESFLYTHFEEICDLMRKYDVSFSLGDGLRPGSIADANDRAQFAELETLGELTQIAWKKGCQVMIEGPGHVPMHKIKINMDKQLKECGEAPFYTLGPLTTDIAPGYDHITSGIGAAMIGWFGCAMLCYVTPKEHLGLPNRNDVKTGVITYKISAHASDLAKGHPAAQLRDDALSRARFDFRWEDQFNLGLDPDTAMAFHDETLPKEAHKVAHFCSMCGPKFCSMKITQDVRDYAATLNDPEAVGLPHAGTAEEGMAQMSKKFMDMGGNVYVEADSVKESNKAL.

Positions 1–13 (MNIRSNPDTTLPA) are enriched in polar residues. The interval 1–26 (MNIRSNPDTTLPAVTTGPLPSSRKIF) is disordered. Substrate is bound by residues N221, M250, Y279, H315, 335–337 (SRG), 376–379 (DGLR), and E415. Position 419 (H419) interacts with Zn(2+). Y442 contributes to the substrate binding site. H483 contacts Zn(2+). Positions 563, 566, and 571 each coordinate [4Fe-4S] cluster.

This sequence belongs to the ThiC family. In terms of assembly, homodimer. Requires [4Fe-4S] cluster as cofactor.

It catalyses the reaction 5-amino-1-(5-phospho-beta-D-ribosyl)imidazole + S-adenosyl-L-methionine = 4-amino-2-methyl-5-(phosphooxymethyl)pyrimidine + CO + 5'-deoxyadenosine + formate + L-methionine + 3 H(+). Its pathway is cofactor biosynthesis; thiamine diphosphate biosynthesis. In terms of biological role, catalyzes the synthesis of the hydroxymethylpyrimidine phosphate (HMP-P) moiety of thiamine from aminoimidazole ribotide (AIR) in a radical S-adenosyl-L-methionine (SAM)-dependent reaction. This is Phosphomethylpyrimidine synthase from Afipia carboxidovorans (strain ATCC 49405 / DSM 1227 / KCTC 32145 / OM5) (Oligotropha carboxidovorans).